The primary structure comprises 377 residues: Homoserine O-succinyltransferase (377 aa).

Positions 50–358 (NAVLICHALS…PSSYGHDSFL (309 aa)) constitute an AB hydrolase-1 domain. The Nucleophile role is filled by S156. Residue R226 participates in substrate binding. Residues D321 and H354 contribute to the active site. D355 contributes to the substrate binding site.

The protein belongs to the AB hydrolase superfamily. MetX family. Homodimer.

Its subcellular location is the cytoplasm. The enzyme catalyses L-homoserine + succinyl-CoA = O-succinyl-L-homoserine + CoA. It functions in the pathway amino-acid biosynthesis; L-methionine biosynthesis via de novo pathway; O-succinyl-L-homoserine from L-homoserine: step 1/1. Its function is as follows. Transfers a succinyl group from succinyl-CoA to L-homoserine, forming succinyl-L-homoserine. This Nitrosomonas europaea (strain ATCC 19718 / CIP 103999 / KCTC 2705 / NBRC 14298) protein is Homoserine O-succinyltransferase.